A 461-amino-acid chain; its full sequence is Photosystem II CP43 reaction center protein (461 aa).

The propeptide occupies 1-2 (ME). Threonine 3 is subject to N-acetylthreonine. Threonine 3 carries the phosphothreonine modification. The next 5 helical transmembrane spans lie at 57 to 81 (LFEVAHFVPEKPMYEQGLILLPHLA), 122 to 143 (LIGPETLEESFPFFGYVWKDKN), 166 to 188 (KAMYFGGVYDTWAPGGGDVRVIT), 243 to 263 (KPFAWARRALVWSGEAYLSYS), and 279 to 300 (WFNNTAYPSEFYGPTGPEASQA). Glutamate 355 is a [CaMn4O5] cluster binding site. The chain crosses the membrane as a helical span at residues 435-459 (RARAAAAGFEKGIERETEPALSMKP).

The protein belongs to the PsbB/PsbC family. PsbC subfamily. PSII is composed of 1 copy each of membrane proteins PsbA, PsbB, PsbC, PsbD, PsbE, PsbF, PsbH, PsbI, PsbJ, PsbK, PsbL, PsbM, PsbT, PsbX, PsbY, PsbZ, Psb30/Ycf12, at least 3 peripheral proteins of the oxygen-evolving complex and a large number of cofactors. It forms dimeric complexes. The cofactor is Binds multiple chlorophylls and provides some of the ligands for the Ca-4Mn-5O cluster of the oxygen-evolving complex. It may also provide a ligand for a Cl- that is required for oxygen evolution. PSII binds additional chlorophylls, carotenoids and specific lipids..

It localises to the plastid. The protein localises to the chloroplast thylakoid membrane. Its function is as follows. One of the components of the core complex of photosystem II (PSII). It binds chlorophyll and helps catalyze the primary light-induced photochemical processes of PSII. PSII is a light-driven water:plastoquinone oxidoreductase, using light energy to abstract electrons from H(2)O, generating O(2) and a proton gradient subsequently used for ATP formation. This Chlorokybus atmophyticus (Soil alga) protein is Photosystem II CP43 reaction center protein.